A 411-amino-acid polypeptide reads, in one-letter code: MPKKFGRIHLVVMDSVGIGAAPDADKFFNHDVETHEAINDVKSDTIGHISEIRGLDVPNLQKLGWGNIPRESPLKTIPAAQKPAAYVTKLEEISKGKDTMTGHWEIMGLNIQTPFPTYPEGYPEDLLEKIEEFSGRKIIREANKPYSGTAVIEDFGPRQLETGELIIYTSADPVLQIAAHEDVISREELYKICEYVRSITLEGSGIMIGRIIARPYVGEAGNFERTDGRRDYALSPFAETVLEKLYKAGIDTYSVGKISDIFNTVGVKYDMGHNHNDMDGVDRLLKAMTKTEFTEGFSFTNLVDFDAKYGHRRDVEGYGKAIEDFDGRLPEIIDAMKEDDLLMITADHGNDPSYVGTDHTREYIPLVIFSKSFKEPKVLPVGHFADISATIAENFSVKKAQTGESFLDALV.

Positions 14, 306, 311, 347, 348, and 359 each coordinate Mn(2+).

It belongs to the phosphopentomutase family. Mn(2+) is required as a cofactor.

Its subcellular location is the cytoplasm. The enzyme catalyses 2-deoxy-alpha-D-ribose 1-phosphate = 2-deoxy-D-ribose 5-phosphate. It catalyses the reaction alpha-D-ribose 1-phosphate = D-ribose 5-phosphate. It participates in carbohydrate degradation; 2-deoxy-D-ribose 1-phosphate degradation; D-glyceraldehyde 3-phosphate and acetaldehyde from 2-deoxy-alpha-D-ribose 1-phosphate: step 1/2. Functionally, isomerase that catalyzes the conversion of deoxy-ribose 1-phosphate (dRib-1-P) and ribose 1-phosphate (Rib-1-P) to deoxy-ribose 5-phosphate (dRib-5-P) and ribose 5-phosphate (Rib-5-P), respectively. The polypeptide is Phosphopentomutase (Lactococcus lactis subsp. cremoris (strain MG1363)).